We begin with the raw amino-acid sequence, 629 residues long: tRNA uridine 5-carboxymethylaminomethyl modification enzyme MnmG (629 aa).

13–18 (GGGHAG) provides a ligand contact to FAD. Position 273–287 (273–287 (GPRYCPSIEDKIHRF)) interacts with NAD(+).

This sequence belongs to the MnmG family. Homodimer. Heterotetramer of two MnmE and two MnmG subunits. FAD is required as a cofactor.

The protein localises to the cytoplasm. NAD-binding protein involved in the addition of a carboxymethylaminomethyl (cmnm) group at the wobble position (U34) of certain tRNAs, forming tRNA-cmnm(5)s(2)U34. This chain is tRNA uridine 5-carboxymethylaminomethyl modification enzyme MnmG, found in Shewanella baltica (strain OS185).